The sequence spans 440 residues: 3-phosphoshikimate 1-carboxyvinyltransferase (440 aa).

The 3-phosphoshikimate site is built by K19, S20, and R24. K19 serves as a coordination point for phosphoenolpyruvate. 2 residues coordinate phosphoenolpyruvate: G92 and R121. The 3-phosphoshikimate site is built by S166, Q168, D315, and K342. Q168 contacts phosphoenolpyruvate. The Proton acceptor role is filled by D315. Phosphoenolpyruvate-binding residues include R346 and R399.

The protein belongs to the EPSP synthase family. In terms of assembly, monomer.

The protein localises to the cytoplasm. The enzyme catalyses 3-phosphoshikimate + phosphoenolpyruvate = 5-O-(1-carboxyvinyl)-3-phosphoshikimate + phosphate. Its pathway is metabolic intermediate biosynthesis; chorismate biosynthesis; chorismate from D-erythrose 4-phosphate and phosphoenolpyruvate: step 6/7. In terms of biological role, catalyzes the transfer of the enolpyruvyl moiety of phosphoenolpyruvate (PEP) to the 5-hydroxyl of shikimate-3-phosphate (S3P) to produce enolpyruvyl shikimate-3-phosphate and inorganic phosphate. The sequence is that of 3-phosphoshikimate 1-carboxyvinyltransferase from Leptospira interrogans serogroup Icterohaemorrhagiae serovar Lai (strain 56601).